Consider the following 212-residue polypeptide: Large ribosomal subunit protein uL3 (212 aa).

Residues 119–147 form a disordered region; the sequence is YQGNIKRWGQSRGPETHGSRYHRIPGSMG.

It belongs to the universal ribosomal protein uL3 family. In terms of assembly, part of the 50S ribosomal subunit. Forms a cluster with proteins L14 and L19.

In terms of biological role, one of the primary rRNA binding proteins, it binds directly near the 3'-end of the 23S rRNA, where it nucleates assembly of the 50S subunit. This is Large ribosomal subunit protein uL3 from Lactobacillus acidophilus (strain ATCC 700396 / NCK56 / N2 / NCFM).